Here is a 341-residue protein sequence, read N- to C-terminus: Hypophosphite import ATP-binding protein HtxD (341 aa).

In terms of domain architecture, ABC transporter spans 6–249 (LQLKNVGKSY…RVHALYQVPA (244 aa)). 38–45 (GTSGAGKS) provides a ligand contact to ATP. The disordered stretch occupies residues 278-341 (IHTPHTRAAP…TGRGQDRGPG (64 aa)). 2 stretches are compositionally biased toward basic and acidic residues: residues 307–320 (ADRRHGAVVRDRTT) and 327–341 (GGHDGTGRGQDRGPG).

It belongs to the ABC transporter superfamily. Phosphonates importer (TC 3.A.1.9.1) family. The complex is composed of two ATP-binding proteins (HtxD), two transmembrane proteins (HtxC and HtxE) and a solute-binding protein (HtxB).

It localises to the cell inner membrane. The enzyme catalyses phosphinate(out) + ATP + H2O = phosphinate(in) + ADP + phosphate + H(+). Its function is as follows. Part of the ABC transporter complex HtxBCDE involved in hypophosphite import. Responsible for energy coupling to the transport system. In Stutzerimonas stutzeri (Pseudomonas stutzeri), this protein is Hypophosphite import ATP-binding protein HtxD (htxD).